Consider the following 290-residue polypeptide: Shikimate dehydrogenase (NADP(+)) (290 aa).

Shikimate is bound by residues Ser22–Ser24 and Thr68. The active-site Proton acceptor is Lys72. Asp84 contributes to the NADP(+) binding site. Shikimate is bound by residues Asn93 and Asp108. NADP(+)-binding positions include Gly133 to Ser137 and Ile228. Tyr230 serves as a coordination point for shikimate. Residue Gly251 participates in NADP(+) binding.

The protein belongs to the shikimate dehydrogenase family. In terms of assembly, homodimer.

The enzyme catalyses shikimate + NADP(+) = 3-dehydroshikimate + NADPH + H(+). The protein operates within metabolic intermediate biosynthesis; chorismate biosynthesis; chorismate from D-erythrose 4-phosphate and phosphoenolpyruvate: step 4/7. Functionally, involved in the biosynthesis of the chorismate, which leads to the biosynthesis of aromatic amino acids. Catalyzes the reversible NADPH linked reduction of 3-dehydroshikimate (DHSA) to yield shikimate (SA). This Leptospira interrogans serogroup Icterohaemorrhagiae serovar Lai (strain 56601) protein is Shikimate dehydrogenase (NADP(+)).